Consider the following 604-residue polypeptide: UvrABC system protein C (604 aa).

The GIY-YIG domain occupies 12–90; the sequence is TAPGVYLMRD…IKQHQPRYNL (79 aa). The UVR domain occupies 200-235; it reads KDLVSGFRQRMKEAAEGLHYEEAARWRDLLKAIDTT.

Belongs to the UvrC family. As to quaternary structure, interacts with UvrB in an incision complex.

It localises to the cytoplasm. The UvrABC repair system catalyzes the recognition and processing of DNA lesions. UvrC both incises the 5' and 3' sides of the lesion. The N-terminal half is responsible for the 3' incision and the C-terminal half is responsible for the 5' incision. This Trichlorobacter lovleyi (strain ATCC BAA-1151 / DSM 17278 / SZ) (Geobacter lovleyi) protein is UvrABC system protein C.